The sequence spans 331 residues: Biotin synthase (331 aa).

The Radical SAM core domain maps to 52 to 277; that stretch reads PDVEVEGIIS…RTMLRFAGGR (226 aa). Residues C67, C71, and C74 each contribute to the [4Fe-4S] cluster site. Residues C110, C143, C202, and R272 each contribute to the [2Fe-2S] cluster site.

Belongs to the radical SAM superfamily. Biotin synthase family. In terms of assembly, homodimer. [4Fe-4S] cluster serves as cofactor. [2Fe-2S] cluster is required as a cofactor.

It catalyses the reaction (4R,5S)-dethiobiotin + (sulfur carrier)-SH + 2 reduced [2Fe-2S]-[ferredoxin] + 2 S-adenosyl-L-methionine = (sulfur carrier)-H + biotin + 2 5'-deoxyadenosine + 2 L-methionine + 2 oxidized [2Fe-2S]-[ferredoxin]. Its pathway is cofactor biosynthesis; biotin biosynthesis; biotin from 7,8-diaminononanoate: step 2/2. Functionally, catalyzes the conversion of dethiobiotin (DTB) to biotin by the insertion of a sulfur atom into dethiobiotin via a radical-based mechanism. This chain is Biotin synthase, found in Mycolicibacterium vanbaalenii (strain DSM 7251 / JCM 13017 / BCRC 16820 / KCTC 9966 / NRRL B-24157 / PYR-1) (Mycobacterium vanbaalenii).